The chain runs to 217 residues: dITP/XTP pyrophosphatase (217 aa).

7–12 (SRNKKK) serves as a coordination point for substrate. Asp-72 functions as the Proton acceptor in the catalytic mechanism. Asp-72 serves as a coordination point for Mg(2+). Substrate is bound by residues Ser-73, 163–166 (FGYD), Lys-195, and 200–201 (HR).

Belongs to the HAM1 NTPase family. Homodimer. Requires Mg(2+) as cofactor.

It catalyses the reaction XTP + H2O = XMP + diphosphate + H(+). It carries out the reaction dITP + H2O = dIMP + diphosphate + H(+). The catalysed reaction is ITP + H2O = IMP + diphosphate + H(+). Functionally, pyrophosphatase that catalyzes the hydrolysis of nucleoside triphosphates to their monophosphate derivatives, with a high preference for the non-canonical purine nucleotides XTP (xanthosine triphosphate), dITP (deoxyinosine triphosphate) and ITP. Seems to function as a house-cleaning enzyme that removes non-canonical purine nucleotides from the nucleotide pool, thus preventing their incorporation into DNA/RNA and avoiding chromosomal lesions. This Corynebacterium jeikeium (strain K411) protein is dITP/XTP pyrophosphatase.